We begin with the raw amino-acid sequence, 332 residues long: Ribose-phosphate pyrophosphokinase (332 aa).

ATP contacts are provided by residues 43–45 and 102–103; these read DGE and RQ. The Mg(2+) site is built by His-136 and Asp-176. Lys-199 is an active-site residue. Residues Arg-201, Asp-225, and 229-233 contribute to the D-ribose 5-phosphate site; that span reads DTGGT.

It belongs to the ribose-phosphate pyrophosphokinase family. Class I subfamily. In terms of assembly, homohexamer. Mg(2+) is required as a cofactor.

The protein localises to the cytoplasm. The enzyme catalyses D-ribose 5-phosphate + ATP = 5-phospho-alpha-D-ribose 1-diphosphate + AMP + H(+). The protein operates within metabolic intermediate biosynthesis; 5-phospho-alpha-D-ribose 1-diphosphate biosynthesis; 5-phospho-alpha-D-ribose 1-diphosphate from D-ribose 5-phosphate (route I): step 1/1. In terms of biological role, involved in the biosynthesis of the central metabolite phospho-alpha-D-ribosyl-1-pyrophosphate (PRPP) via the transfer of pyrophosphoryl group from ATP to 1-hydroxyl of ribose-5-phosphate (Rib-5-P). The sequence is that of Ribose-phosphate pyrophosphokinase from Mycoplasma genitalium (strain ATCC 33530 / DSM 19775 / NCTC 10195 / G37) (Mycoplasmoides genitalium).